We begin with the raw amino-acid sequence, 148 residues long: MRALIILGLVLLSVTVQGKIFERCELARTLKKLGLDGYKGVSLANWVCLAKWESGYNTEATNYNPGDESTDYGIFQINSRYWCNNGKTPGAVDACHISCSALLQNNIADAVACAKRVVSDPQGIRAWVAWRNHCQNKDVSQYVKGCGV.

Positions 1 to 18 (MRALIILGLVLLSVTVQG) are cleaved as a signal peptide. Positions 19-148 (KIFERCELAR…VSQYVKGCGV (130 aa)) constitute a C-type lysozyme domain. 4 cysteine pairs are disulfide-bonded: C24–C146, C48–C134, C83–C99, and C95–C113. Active-site residues include E53 and D71.

It belongs to the glycosyl hydrolase 22 family. Monomer.

Its subcellular location is the secreted. The catalysed reaction is Hydrolysis of (1-&gt;4)-beta-linkages between N-acetylmuramic acid and N-acetyl-D-glucosamine residues in a peptidoglycan and between N-acetyl-D-glucosamine residues in chitodextrins.. In terms of biological role, lysozymes have primarily a bacteriolytic function; those in tissues and body fluids are associated with the monocyte-macrophage system and enhance the activity of immunoagents. Also plays a role in digestion in this species. The chain is Lysozyme C (LYZ) from Trachypithecus francoisi (Francois' leaf monkey).